A 62-amino-acid chain; its full sequence is Large ribosomal subunit protein bL28 (62 aa).

The interval 1-24 is disordered; the sequence is MGKQCFVTGRKASTGNNRSHALNS. The segment covering 11-24 has biased composition (polar residues); that stretch reads KASTGNNRSHALNS.

This sequence belongs to the bacterial ribosomal protein bL28 family.

This chain is Large ribosomal subunit protein bL28, found in Staphylococcus saprophyticus subsp. saprophyticus (strain ATCC 15305 / DSM 20229 / NCIMB 8711 / NCTC 7292 / S-41).